Reading from the N-terminus, the 277-residue chain is 3-methyl-2-oxobutanoate hydroxymethyltransferase (277 aa).

Mg(2+) is bound by residues Asp-53 and Asp-96. 3-methyl-2-oxobutanoate contacts are provided by residues 53-54, Asp-96, and Lys-126; that span reads DS. Residue Glu-128 coordinates Mg(2+). Glu-195 (proton acceptor) is an active-site residue.

Belongs to the PanB family. Homodecamer; pentamer of dimers. Mg(2+) serves as cofactor.

The protein localises to the cytoplasm. The enzyme catalyses 3-methyl-2-oxobutanoate + (6R)-5,10-methylene-5,6,7,8-tetrahydrofolate + H2O = 2-dehydropantoate + (6S)-5,6,7,8-tetrahydrofolate. It participates in cofactor biosynthesis; (R)-pantothenate biosynthesis; (R)-pantoate from 3-methyl-2-oxobutanoate: step 1/2. Catalyzes the reversible reaction in which hydroxymethyl group from 5,10-methylenetetrahydrofolate is transferred onto alpha-ketoisovalerate to form ketopantoate. The chain is 3-methyl-2-oxobutanoate hydroxymethyltransferase from Chlorobium phaeobacteroides (strain DSM 266 / SMG 266 / 2430).